The following is a 411-amino-acid chain: Protein phosphatase 1 regulatory subunit 36 (411 aa).

As to quaternary structure, interacts with PPP1CA.

Its function is as follows. Inhibits phosphatase activity of protein phosphatase 1 (PP1) complexes. The protein is Protein phosphatase 1 regulatory subunit 36 (Ppp1r36) of Rattus norvegicus (Rat).